We begin with the raw amino-acid sequence, 110 residues long: Large ribosomal subunit protein P2B (110 aa).

Residues 73–88 are compositionally biased toward low complexity; that stretch reads TPAAGGAAGAEATSAA. A disordered region spans residues 73 to 110; it reads TPAAGGAAGAEATSAAEEAKEEEAAEESDEDMGFGLFD. Residues 91–104 are compositionally biased toward acidic residues; it reads AKEEEAAEESDEDM. Phosphoserine is present on S100.

This sequence belongs to the eukaryotic ribosomal protein P1/P2 family. Component of the large ribosomal subunit (LSU). Mature yeast ribosomes consist of a small (40S) and a large (60S) subunit. The 40S small subunit contains 1 molecule of ribosomal RNA (18S rRNA) and at least 33 different proteins. The large 60S subunit contains 3 rRNA molecules (25S, 5.8S and 5S rRNA) and at least 46 different proteins. The acidic ribosomal P-proteins form the stalk structure of the 60S subunit. They are organized as a pentameric complex in which uL10/P0 interacts with 2 heterodimers of P1 and P2 proteins.

It localises to the cytoplasm. Component of the ribosome, a large ribonucleoprotein complex responsible for the synthesis of proteins in the cell. The small ribosomal subunit (SSU) binds messenger RNAs (mRNAs) and translates the encoded message by selecting cognate aminoacyl-transfer RNA (tRNA) molecules. The large subunit (LSU) contains the ribosomal catalytic site termed the peptidyl transferase center (PTC), which catalyzes the formation of peptide bonds, thereby polymerizing the amino acids delivered by tRNAs into a polypeptide chain. The nascent polypeptides leave the ribosome through a tunnel in the LSU and interact with protein factors that function in enzymatic processing, targeting, and the membrane insertion of nascent chains at the exit of the ribosomal tunnel. This Schizosaccharomyces pombe (strain 972 / ATCC 24843) (Fission yeast) protein is Large ribosomal subunit protein P2B (rpp202).